Reading from the N-terminus, the 298-residue chain is Ribosomal RNA small subunit methyltransferase H (298 aa).

S-adenosyl-L-methionine contacts are provided by residues 35–37 (GGH), D55, F82, D100, and Q107.

The protein belongs to the methyltransferase superfamily. RsmH family.

It is found in the cytoplasm. It catalyses the reaction cytidine(1402) in 16S rRNA + S-adenosyl-L-methionine = N(4)-methylcytidine(1402) in 16S rRNA + S-adenosyl-L-homocysteine + H(+). Its function is as follows. Specifically methylates the N4 position of cytidine in position 1402 (C1402) of 16S rRNA. The chain is Ribosomal RNA small subunit methyltransferase H from Chlamydia felis (strain Fe/C-56) (Chlamydophila felis).